Reading from the N-terminus, the 942-residue chain is UvrABC system protein A (942 aa).

32 to 39 (GLSGSGKS) contributes to the ATP binding site. Residues 251 to 278 (CPVCGFTVPELEPRLFSFNAPFGSCPTC) form a C4-type zinc finger. 2 ABC transporter domains span residues 308-589 (WNPI…KKSI) and 609-937 (GNGR…HYLK). Position 641 to 648 (641 to 648 (GVSGSGKS)) interacts with ATP. A C4-type zinc finger spans residues 740–766 (CEACSGDGIIKIEMHFLPDVYVPCEVC).

Belongs to the ABC transporter superfamily. UvrA family. As to quaternary structure, forms a heterotetramer with UvrB during the search for lesions.

It localises to the cytoplasm. Its function is as follows. The UvrABC repair system catalyzes the recognition and processing of DNA lesions. UvrA is an ATPase and a DNA-binding protein. A damage recognition complex composed of 2 UvrA and 2 UvrB subunits scans DNA for abnormalities. When the presence of a lesion has been verified by UvrB, the UvrA molecules dissociate. The sequence is that of UvrABC system protein A from Streptococcus pyogenes serotype M6 (strain ATCC BAA-946 / MGAS10394).